Reading from the N-terminus, the 194-residue chain is MSLLLLGWLPTGMTHQDPPSWGKPRSHRTLRCYSAEELSHGQAPPHLLTRSARWEQALPVALVASLEATGHRRQHEGPLAGTQCPVLRPEEVLEADTHERSISPWRYRIDTDENRYPQKLAVAECLCRGCINAKTGRETAALNSVQLLQSLLVLRRQPCSRDGTADPTPGSFAFHTEFIRVPVGCTCVLPRSTQ.

The N-terminal stretch at 1-16 (MSLLLLGWLPTGMTHQ) is a signal peptide. 2 disulfides stabilise this stretch: C125–C185 and C130–C187.

It belongs to the IL-17 family. In terms of assembly, binds to a heterodimer formed by IL17RA and IL17RE. In terms of tissue distribution, expressed by epithelial cells after bacterial challenge. Low expression, if any, in lymphocytes.

Its subcellular location is the secreted. Cytokine that plays a crucial role in innate immunity of the epithelium, including to intestinal bacterial pathogens, in an autocrine manner. Stimulates the production of antibacterial peptides and pro-inflammatory molecules for host defense by signaling through the NFKB and MAPK pathways. Acts synergically with IL22, TNF and IL1B in inducing antibacterial peptides. May have protective function by maintaining epithelial homeostasis after an inflammatory challenge, such as that caused in the intestine by dextran sulfate sodium in a colitis model. May also promote an inflammatory phenotype, such as skin in a psoriasis model. Enhanced IL17C/IL17RE signaling may also lead to greater susceptibility to autoimmune diseases, such as autoimmune encephalitis. The protein is Interleukin-17C (Il17c) of Mus musculus (Mouse).